An 876-amino-acid polypeptide reads, in one-letter code: Importin subunit beta-1 (876 aa).

Residue methionine 1 is modified to N-acetylmethionine. HEAT repeat units follow at residues 3-29 (LITI…ERAA), 32-62 (NLPT…LQIK), 85-120 (ANAR…ACAE), 129-160 (LIPQ…ICQD), and 170-201 (SNEI…LLNS). At serine 12 the chain carries Phosphoserine. An Importin N-terminal domain is found at 21–101 (AQKFLERAAV…KNYVLQTLGT (81 aa)). Lysine 211 bears the N6-acetyllysine mark. 14 HEAT repeats span residues 212-247 (ESER…IMSL), 260-302 (LFAI…EAAE), 314-359 (YAKG…STCC), 363-392 (IVPH…AFGS), 399-438 (PNQL…ICEL), 449-485 (LAPL…YEAA), 500-537 (SSSF…EIVK), 544-592 (YPAV…QNVL), 597-639 (HQDA…VEVL), 644-680 (LKYM…LCRA), 686-724 (LPFC…ALAI), 729-777 (KKYL…QGLK), 785-828 (PDVM…LCTA), and 834-875 (LKLV…LKNQ). The essential for high affinity interaction with RPL23A stretch occupies residues 286–462 (VCDEEMDLAI…LQCLIEGLSA (177 aa)). The tract at residues 329 to 342 (TLTKQDENDDDDDW) is IAB-binding. The interval 334 to 419 (DENDDDDDWN…MPTLIELMKD (86 aa)) is ran-GTP binding. Lysine 835 and lysine 867 each carry N6-acetyllysine.

Belongs to the importin beta family. Importin beta-1 subfamily. Forms a complex with an importin alpha subunit. Interacts with XPO1. Forms a heterodimer with IPO7. The KPNB1/IPO7 heterodimer interacts with H1 histone. Interacts with SNUPN. Interacts with H2A, H2B, H3 and H4 histones. Component of an import snRNP complex composed of KPNB1, SNUPN, SMN1 and ZNF259. Component of a nuclear export receptor complex composed of KPNB1, Ran, SNUPN and XPO1. Interacts with SRY. Interacts with PRKCI/atypical protein kinase C iota. Interacts with KPNA2. Interacts with KPNA7. Interacts with SNAI1 (via zinc fingers) and SNAI2 (via zinc fingers). Interacts with SLC35G1 and STIM1. Interacts with DCAF8. Interacts with RAN. Interacts with NUMA1 (via C-terminus); this interaction is inhibited by RanGTP. Interacts with ZBED1/hDREF; required for nuclear import of ZBED1/hDREF. Interacts with SRP19. Interacts with RPL23A (via BIB domain), RPS7 and RPL5. Mono-ADP-ribosylated by PARP16.

It is found in the cytoplasm. Its subcellular location is the nucleus envelope. Functionally, functions in nuclear protein import, either in association with an adapter protein, like an importin-alpha subunit, which binds to nuclear localization signals (NLS) in cargo substrates, or by acting as autonomous nuclear transport receptor. Acting autonomously, serves itself as NLS receptor. Docking of the importin/substrate complex to the nuclear pore complex (NPC) is mediated by KPNB1 through binding to nucleoporin FxFG repeats and the complex is subsequently translocated through the pore by an energy requiring, Ran-dependent mechanism. At the nucleoplasmic side of the NPC, Ran binds to importin-beta and the three components separate and importin-alpha and -beta are re-exported from the nucleus to the cytoplasm where GTP hydrolysis releases Ran from importin. The directionality of nuclear import is thought to be conferred by an asymmetric distribution of the GTP- and GDP-bound forms of Ran between the cytoplasm and nucleus. Mediates autonomously the nuclear import of ribosomal proteins RPL23A, RPS7 and RPL5. In association with IPO7, mediates the nuclear import of H1 histone. In vitro, mediates nuclear import of H2A, H2B, H3 and H4 histones. Imports MRTFA, SNAI1 and PRKCI into the nucleus. This is Importin subunit beta-1 (Kpnb1) from Mus musculus (Mouse).